We begin with the raw amino-acid sequence, 235 residues long: Purine nucleoside phosphorylase DeoD-type (235 aa).

Residue His4 coordinates a purine D-ribonucleoside. Residues Gly20, Arg24, Arg43, and 87-90 (RVGT) each bind phosphate. A purine D-ribonucleoside-binding positions include Glu162, 179-181 (EME), and 203-204 (SD). The active-site Proton donor is the Asp204.

The protein belongs to the PNP/UDP phosphorylase family. As to quaternary structure, homohexamer; trimer of homodimers.

The catalysed reaction is a purine D-ribonucleoside + phosphate = a purine nucleobase + alpha-D-ribose 1-phosphate. It catalyses the reaction a purine 2'-deoxy-D-ribonucleoside + phosphate = a purine nucleobase + 2-deoxy-alpha-D-ribose 1-phosphate. In terms of biological role, catalyzes the reversible phosphorolytic breakdown of the N-glycosidic bond in the beta-(deoxy)ribonucleoside molecules, with the formation of the corresponding free purine bases and pentose-1-phosphate. The polypeptide is Purine nucleoside phosphorylase DeoD-type (Bacillus cereus (strain ATCC 14579 / DSM 31 / CCUG 7414 / JCM 2152 / NBRC 15305 / NCIMB 9373 / NCTC 2599 / NRRL B-3711)).